Reading from the N-terminus, the 257-residue chain is Phosphatidylglycerol--prolipoprotein diacylglyceryl transferase (257 aa).

A run of 4 helical transmembrane segments spans residues 8-28 (IFGL…ILAY), 48-68 (VFIV…VIFN), 84-104 (EGGL…YLMS), and 109-129 (LNFL…QAIG). Residue arginine 130 participates in a 1,2-diacyl-sn-glycero-3-phospho-(1'-sn-glycerol) binding. 3 consecutive transmembrane segments (helical) span residues 169-189 (PTFL…LLIT), 196-216 (GSIF…IEGL), and 225-245 (SLRM…ILII).

Belongs to the Lgt family.

Its subcellular location is the cell membrane. It carries out the reaction L-cysteinyl-[prolipoprotein] + a 1,2-diacyl-sn-glycero-3-phospho-(1'-sn-glycerol) = an S-1,2-diacyl-sn-glyceryl-L-cysteinyl-[prolipoprotein] + sn-glycerol 1-phosphate + H(+). It functions in the pathway protein modification; lipoprotein biosynthesis (diacylglyceryl transfer). In terms of biological role, catalyzes the transfer of the diacylglyceryl group from phosphatidylglycerol to the sulfhydryl group of the N-terminal cysteine of a prolipoprotein, the first step in the formation of mature lipoproteins. In Clostridium novyi (strain NT), this protein is Phosphatidylglycerol--prolipoprotein diacylglyceryl transferase.